The following is a 485-amino-acid chain: Probable cobyric acid synthase (485 aa).

A GATase cobBQ-type domain is found at 250–435 (EIEIAVIRLP…LHGLFDNKNI (186 aa)). Cys-328 (nucleophile) is an active-site residue. Residue His-427 is part of the active site.

Belongs to the CobB/CobQ family. CobQ subfamily.

The protein operates within cofactor biosynthesis; adenosylcobalamin biosynthesis. Its function is as follows. Catalyzes amidations at positions B, D, E, and G on adenosylcobyrinic A,C-diamide. NH(2) groups are provided by glutamine, and one molecule of ATP is hydrogenolyzed for each amidation. The protein is Probable cobyric acid synthase of Methanosarcina barkeri (strain Fusaro / DSM 804).